We begin with the raw amino-acid sequence, 321 residues long: Glucokinase (321 aa).

8–13 (GDVGGT) is a binding site for ATP.

This sequence belongs to the bacterial glucokinase family.

The protein localises to the cytoplasm. It catalyses the reaction D-glucose + ATP = D-glucose 6-phosphate + ADP + H(+). The chain is Glucokinase from Salmonella schwarzengrund (strain CVM19633).